A 587-amino-acid polypeptide reads, in one-letter code: Aspartate--tRNA ligase (587 aa).

Residue glutamate 174 participates in L-aspartate binding. The segment at glutamine 198–lysine 201 is aspartate. L-aspartate is bound at residue arginine 220. ATP-binding positions include arginine 220–glutamate 222 and glutamine 229. L-aspartate is bound at residue histidine 443. Position 477 (glutamate 477) interacts with ATP. L-aspartate is bound at residue arginine 484. Glycine 529–arginine 532 contributes to the ATP binding site.

The protein belongs to the class-II aminoacyl-tRNA synthetase family. Type 1 subfamily. Homodimer.

It localises to the cytoplasm. It carries out the reaction tRNA(Asp) + L-aspartate + ATP = L-aspartyl-tRNA(Asp) + AMP + diphosphate. Catalyzes the attachment of L-aspartate to tRNA(Asp) in a two-step reaction: L-aspartate is first activated by ATP to form Asp-AMP and then transferred to the acceptor end of tRNA(Asp). The polypeptide is Aspartate--tRNA ligase (Streptococcus pneumoniae (strain 70585)).